The following is a 282-amino-acid chain: Para-Rep C2 (282 aa).

Residues methionine 1–proline 99 enclose the CRESS-DNA virus Rep endonuclease domain. Residues cysteine 7–leucine 10 carry the RCR-1 motif. The a divalent metal cation site is built by glutamate 38 and histidine 47. Positions histidine 47–glutamine 49 match the RCR-2 motif. The Nuclear localization signal motif lies at lysine 56–lysine 77. The active-site For DNA cleavage activity is tyrosine 86. The RCR-3 signature appears at tyrosine 86–lysine 89. The Nuclear localization signal motif lies at proline 99–asparagine 105. Position 174–182 (glycine 174–serine 182) interacts with ATP.

It belongs to the nanoviridea/circoviridae replication-associated protein family. Homooligomer (Potential). Rep binds to repeated DNA motifs (iterons). Mg(2+) serves as cofactor. Requires Mn(2+) as cofactor.

It is found in the host nucleus. It carries out the reaction ATP + H2O = ADP + phosphate + H(+). In terms of biological role, initiates and terminates the replication only of its own subviral DNA molecule. The closed circular ssDNA genome is first converted to a superhelical dsDNA. Rep binds a specific hairpin at the genome origin of replication. Introduces an endonucleolytic nick within the intergenic region of the genome, thereby initiating the rolling circle replication (RCR). Following cleavage, binds covalently to the 5'-phosphate of DNA as a tyrosyl ester. The cleavage gives rise to a free 3'-OH that serves as a primer for the cellular DNA polymerase. The polymerase synthesizes the (+) strand DNA by rolling circle mechanism. After one round of replication, a Rep-catalyzed nucleotidyl transfer reaction releases a circular single-stranded virus genome, thereby terminating the replication. Displays origin-specific DNA cleavage, nucleotidyl transferase, ATPase and helicase activities. The sequence is that of Para-Rep C2 (C2) from Milk vetch dwarf C2 alphasatellite (MVDC2A).